An 835-amino-acid chain; its full sequence is Protein translocase subunit SecA (835 aa).

ATP is bound by residues Q85, 103 to 107, and D492; that span reads GEGKT. Residues C819, C821, C830, and C831 each contribute to the Zn(2+) site.

Belongs to the SecA family. As to quaternary structure, monomer and homodimer. Part of the essential Sec protein translocation apparatus which comprises SecA, SecYEG and auxiliary proteins SecDF. Other proteins may also be involved. The cofactor is Zn(2+).

It localises to the cell membrane. Its subcellular location is the cytoplasm. It carries out the reaction ATP + H2O + cellular proteinSide 1 = ADP + phosphate + cellular proteinSide 2.. Part of the Sec protein translocase complex. Interacts with the SecYEG preprotein conducting channel. Has a central role in coupling the hydrolysis of ATP to the transfer of proteins into and across the cell membrane, serving as an ATP-driven molecular motor driving the stepwise translocation of polypeptide chains across the membrane. This chain is Protein translocase subunit SecA, found in Clostridium botulinum (strain Loch Maree / Type A3).